A 75-amino-acid polypeptide reads, in one-letter code: Large ribosomal subunit protein uL29 (75 aa).

Belongs to the universal ribosomal protein uL29 family.

In Pyrobaculum aerophilum (strain ATCC 51768 / DSM 7523 / JCM 9630 / CIP 104966 / NBRC 100827 / IM2), this protein is Large ribosomal subunit protein uL29.